Consider the following 151-residue polypeptide: Transcription antitermination protein NusB (151 aa).

The protein belongs to the NusB family.

In terms of biological role, involved in transcription antitermination. Required for transcription of ribosomal RNA (rRNA) genes. Binds specifically to the boxA antiterminator sequence of the ribosomal RNA (rrn) operons. The chain is Transcription antitermination protein NusB from Thermodesulfovibrio yellowstonii (strain ATCC 51303 / DSM 11347 / YP87).